A 591-amino-acid chain; its full sequence is Aspartate--tRNA ligase (591 aa).

Glu-176 is a binding site for L-aspartate. Residues 200 to 203 (QILK) are aspartate. Arg-222 serves as a coordination point for L-aspartate. Residues 222 to 224 (RDE) and Gln-231 contribute to the ATP site. His-450 lines the L-aspartate pocket. Position 484 (Glu-484) interacts with ATP. Arg-491 is a binding site for L-aspartate. 536–539 (GLDR) lines the ATP pocket.

Belongs to the class-II aminoacyl-tRNA synthetase family. Type 1 subfamily. As to quaternary structure, homodimer.

The protein localises to the cytoplasm. It catalyses the reaction tRNA(Asp) + L-aspartate + ATP = L-aspartyl-tRNA(Asp) + AMP + diphosphate. Functionally, catalyzes the attachment of L-aspartate to tRNA(Asp) in a two-step reaction: L-aspartate is first activated by ATP to form Asp-AMP and then transferred to the acceptor end of tRNA(Asp). This chain is Aspartate--tRNA ligase, found in Listeria welshimeri serovar 6b (strain ATCC 35897 / DSM 20650 / CCUG 15529 / CIP 8149 / NCTC 11857 / SLCC 5334 / V8).